The primary structure comprises 24 residues: Neurotoxin 5 (24 aa).

An LCN-type CS-alpha/beta domain is found at 2-24 (RDAYIAQNYNCVYTCFKNDYCND).

It belongs to the long (4 C-C) scorpion toxin superfamily. Sodium channel inhibitor family. Alpha subfamily. Expressed by the venom gland.

The protein resides in the secreted. Functionally, binds to sodium channels (Nav) and inhibits the inactivation of the activated channels, thereby blocking neuronal transmission. The chain is Neurotoxin 5 from Buthus occitanus tunetanus (Common European scorpion).